Here is a 397-residue protein sequence, read N- to C-terminus: Protein WRKY1 (397 aa).

The segment at residues 326–392 is a DNA-binding region (WRKY); it reads KVADIPADEF…YEGDHNHNRV (67 aa).

The protein belongs to the WRKY group II-d family. In terms of assembly, interacts with RS2. As to expression, more abundant in apices and young leaf primordia than in fully expanded leaf tissues.

Its subcellular location is the nucleus. Transcription factor. Interacts specifically with the W box (5'-(T)TGAC[CT]-3'), a frequently occurring elicitor-responsive cis-acting element. This Zea mays (Maize) protein is Protein WRKY1.